Reading from the N-terminus, the 128-residue chain is Small ribosomal subunit protein uS11 (128 aa).

The protein belongs to the universal ribosomal protein uS11 family. In terms of assembly, part of the 30S ribosomal subunit. Interacts with proteins S7 and S18. Binds to IF-3.

Its function is as follows. Located on the platform of the 30S subunit, it bridges several disparate RNA helices of the 16S rRNA. Forms part of the Shine-Dalgarno cleft in the 70S ribosome. This chain is Small ribosomal subunit protein uS11, found in Wolbachia sp. subsp. Drosophila simulans (strain wRi).